We begin with the raw amino-acid sequence, 78 residues long: Acyl carrier protein (78 aa).

A Carrier domain is found at Met-1–Lys-77. Position 37 is an O-(pantetheine 4'-phosphoryl)serine (Ser-37).

This sequence belongs to the acyl carrier protein (ACP) family. 4'-phosphopantetheine is transferred from CoA to a specific serine of apo-ACP by AcpS. This modification is essential for activity because fatty acids are bound in thioester linkage to the sulfhydryl of the prosthetic group.

The protein localises to the secreted. It participates in lipid metabolism; fatty acid biosynthesis. In terms of biological role, carrier of the growing fatty acid chain in fatty acid biosynthesis. Has hemolytic activity forming pores approximately 1 nm in diameter into erythrocytes. Is able to induce murine colonic lesions and to disrupt the integrity of epithelial cell monolayers. The polypeptide is Acyl carrier protein (acpP) (Brachyspira hyodysenteriae (Treponema hyodysenteriae)).